The chain runs to 361 residues: Peptide chain release factor 1 (361 aa).

N5-methylglutamine is present on Q236. Over residues 285–309 the composition is skewed to basic and acidic residues; the sequence is TAKDSARAADRKAQVGSGDRSERIR. Residues 285-313 form a disordered region; sequence TAKDSARAADRKAQVGSGDRSERIRTYNF.

It belongs to the prokaryotic/mitochondrial release factor family. Post-translationally, methylated by PrmC. Methylation increases the termination efficiency of RF1.

The protein localises to the cytoplasm. Functionally, peptide chain release factor 1 directs the termination of translation in response to the peptide chain termination codons UAG and UAA. The chain is Peptide chain release factor 1 from Methylorubrum populi (strain ATCC BAA-705 / NCIMB 13946 / BJ001) (Methylobacterium populi).